A 341-amino-acid polypeptide reads, in one-letter code: Phenylalanine--tRNA ligase alpha subunit (341 aa).

Glu-256 contacts Mg(2+).

The protein belongs to the class-II aminoacyl-tRNA synthetase family. Phe-tRNA synthetase alpha subunit type 1 subfamily. Tetramer of two alpha and two beta subunits. Mg(2+) is required as a cofactor.

Its subcellular location is the cytoplasm. The catalysed reaction is tRNA(Phe) + L-phenylalanine + ATP = L-phenylalanyl-tRNA(Phe) + AMP + diphosphate + H(+). The polypeptide is Phenylalanine--tRNA ligase alpha subunit (Leptospira borgpetersenii serovar Hardjo-bovis (strain JB197)).